The following is a 187-amino-acid chain: Cytochrome b-245 chaperone 1 (187 aa).

The chain crosses the membrane as a helical span at residues Gly-20–Gly-42. Residues Glu-167–Ser-187 form a disordered region. Ser-168 and Ser-170 each carry phosphoserine.

This sequence belongs to the CYBC1 family. In terms of assembly, interacts with CYBB; CYBC1 may act as a chaperone stabilizing Cytochrome b-245 heterodimer.

The protein resides in the endoplasmic reticulum membrane. In terms of biological role, functions as a chaperone necessary for a stable expression of the CYBA and CYBB subunits of the cytochrome b-245 heterodimer. Controls the phagocyte respiratory burst and is essential for innate immunity. The chain is Cytochrome b-245 chaperone 1 from Mus musculus (Mouse).